The chain runs to 398 residues: Diaminopropionate ammonia-lyase (398 aa).

Position 77 is an N6-(pyridoxal phosphate)lysine (lysine 77).

It belongs to the diaminopropionate ammonia-lyase family. As to quaternary structure, homodimer. It depends on pyridoxal 5'-phosphate as a cofactor.

The enzyme catalyses (S)-2,3-diaminopropanoate + H2O + H(+) = pyruvate + 2 NH4(+). The catalysed reaction is (R)-2,3-diaminopropanoate + H2O + H(+) = pyruvate + 2 NH4(+). In terms of biological role, catalyzes the alpha,beta-elimination reaction of both L- and D-alpha,beta-diaminopropionate (DAP) to form pyruvate and ammonia. The D-isomer of serine is degraded to pyruvate, though very poorly; other amino acids (L-serine, D- and L-threonine, D- and L-beta-Cl-alanine) are not substrates. This chain is Diaminopropionate ammonia-lyase (ygeX), found in Escherichia coli O157:H7.